We begin with the raw amino-acid sequence, 322 residues long: Cytochrome c biogenesis protein CcsA (322 aa).

A run of 8 helical transmembrane segments spans residues 9–29 (ILTH…LITL), 44–64 (GMIT…IFLG), 71–91 (LYES…VPYF), 97–117 (FLSA…TSGL), 143–163 (MILG…FLVI), 225–245 (IISI…VWAN), 254–274 (WDPK…YFHI), and 286–306 (AIVA…VNLL).

Belongs to the CcmF/CycK/Ccl1/NrfE/CcsA family. As to quaternary structure, may interact with Ccs1.

It is found in the plastid. It localises to the chloroplast thylakoid membrane. Required during biogenesis of c-type cytochromes (cytochrome c6 and cytochrome f) at the step of heme attachment. This Manihot esculenta (Cassava) protein is Cytochrome c biogenesis protein CcsA.